The sequence spans 363 residues: Outer membrane porin F (363 aa).

An N-terminal signal peptide occupies residues 1 to 22; the sequence is MMKRKILAAVIPALLAAATANA. A beta stranded membrane pass occupies residues 23 to 28; that stretch reads AEIYNK. Position 29 (Asp29) is a topological domain, periplasmic. Residues 30–45 form a beta stranded membrane-spanning segment; the sequence is GNKLDLYGKAVGRHVW. Topologically, residues 46–56 are extracellular; the sequence is TTTGDSKNADQ. Residues 57–69 form a beta stranded membrane-spanning segment; the sequence is TYAQIGFKGETQI. The Periplasmic segment spans residues 70-71; that stretch reads NT. Residues 72-84 form a beta stranded membrane-spanning segment; that stretch reads DLTGFGQWEYRTK. Residues 85–99 are Extracellular-facing; sequence ADRAEGEQQNSNLVR. Residues 100 to 108 form a beta stranded membrane-spanning segment; that stretch reads LAFAGLKYA. Residue Glu109 is a topological domain, periplasmic. Residues 110 to 117 traverse the membrane as a beta stranded segment; it reads VGSIDYGR. Residues 118 to 154 lie on the Extracellular side of the membrane; the sequence is NYGIVYDVESYTDMAPYFSGETWGGAYTDNYMTSRAG. A beta stranded membrane pass occupies residues 155–161; the sequence is GLLTYRN. Topologically, residues 162 to 169 are periplasmic; sequence SDFFGLVD. The beta stranded transmembrane segment at 170–181 threads the bilayer; it reads GLSFGIQYQGKN. Residues 182 to 192 lie on the Extracellular side of the membrane; that stretch reads QDNHSINSQNG. The chain crosses the membrane as a beta stranded span at residues 193–203; that stretch reads DGVGYTMAYEF. Position 204 (Asp204) is a topological domain, periplasmic. Residues 205–217 form a beta stranded membrane-spanning segment; sequence GFGVTAAYSNSKR. The Extracellular segment spans residues 218–230; that stretch reads TNDQQDRDGNGDR. A beta stranded membrane pass occupies residues 231 to 242; that stretch reads AESWAVGAKYDA. Position 243 (Asn243) is a topological domain, periplasmic. The beta stranded transmembrane segment at 244–256 threads the bilayer; it reads NVYLAAVYAETRN. Topologically, residues 257–272 are extracellular; the sequence is MSIVENTVTDTVEMAN. A beta stranded membrane pass occupies residues 273–285; the sequence is KTQNLEVVAQYQF. Over 286–287 the chain is Periplasmic; it reads DF. Residues 288–301 traverse the membrane as a beta stranded segment; the sequence is GLRPAISYVQSKGK. Residues 302 to 312 lie on the Extracellular side of the membrane; it reads QLNGADGSADL. The chain crosses the membrane as a beta stranded span at residues 313 to 324; sequence AKYIQAGATYYF. Residues 325 to 326 lie on the Periplasmic side of the membrane; the sequence is NK. The beta stranded transmembrane segment at 327 to 336 threads the bilayer; the sequence is NMNVWVDYRF. Over 337-353 the chain is Extracellular; it reads NLLDENDYSSSYVGTDD. A beta stranded membrane pass occupies residues 354 to 363; that stretch reads QAAVGITYQF.

The protein belongs to the Gram-negative porin family. In terms of assembly, homotrimer. Forms mixed heterotrimers with OmpC and with PhoE; other mixed heterotrimers with other porins are also probable.

It is found in the cell outer membrane. Its function is as follows. Forms pores that allow passive diffusion of small molecules across the outer membrane. The protein is Outer membrane porin F (ompF) of Salmonella typhi.